The sequence spans 173 residues: Co-chaperone protein HscB (173 aa).

The 73-residue stretch at 2–74 folds into the J domain; sequence DYFTLFGLPV…LKRAEYMLSL (73 aa).

Belongs to the HscB family. Interacts with HscA and stimulates its ATPase activity. Interacts with IscU.

Co-chaperone involved in the maturation of iron-sulfur cluster-containing proteins. Seems to help targeting proteins to be folded toward HscA. This chain is Co-chaperone protein HscB, found in Serratia proteamaculans (strain 568).